The following is an 847-amino-acid chain: Glucans biosynthesis glucosyltransferase H (847 aa).

Residues 1–138 (MNKTTEYIDA…KWRTVGTIRR (138 aa)) are Cytoplasmic-facing. A helical membrane pass occupies residues 139–156 (YILLILTLAQTVVATWYM). Topologically, residues 157-193 (KTILPYQGWALINPMDMVGQDIWVSFMQLLPYMLQTG) are periplasmic. Residues 194 to 216 (ILILFAVLFCWVSAGFWTALMGF) traverse the membrane as a helical segment. Topologically, residues 217–511 (LQLLIGRDKY…LVKGMHPVHR (295 aa)) are cytoplasmic. A helical membrane pass occupies residues 512-534 (AVFLTGVMSYLSAPLWFMFLALS). The Periplasmic segment spans residues 535–567 (TALQVVHALTEPQYFLQPRQLFPVWPQWRPELA). Residues 568-590 (IALFASTMVLLFLPKLLSIMLIW) form a helical membrane-spanning segment. Over 591–602 (CKGTKEYGGFWR) the chain is Cytoplasmic. A helical transmembrane segment spans residues 603–625 (VTLSLLLEVLFSVLLAPVRMLFH). Residues 626 to 679 (TVFVVSAFLGWEVVWNSPQRDDDSTPWGEAFMRHGSQLLLGLVWAVGMAWLDLR) are Periplasmic-facing. A helical transmembrane segment spans residues 680-702 (FLFWLAPIVFSLILSPFVSVISS). The Cytoplasmic segment spans residues 703–847 (RSTVGLRTKR…ALQGRTSSAR (145 aa)).

Belongs to the glycosyltransferase 2 family. OpgH subfamily.

It is found in the cell inner membrane. The protein operates within glycan metabolism; osmoregulated periplasmic glucan (OPG) biosynthesis. Functionally, involved in the biosynthesis of osmoregulated periplasmic glucans (OPGs). The protein is Glucans biosynthesis glucosyltransferase H of Salmonella typhimurium (strain LT2 / SGSC1412 / ATCC 700720).